The primary structure comprises 104 residues: Flagellar hook-basal body complex protein FliE (104 aa).

It belongs to the FliE family.

It localises to the bacterial flagellum basal body. This Salmonella typhi protein is Flagellar hook-basal body complex protein FliE.